A 977-amino-acid polypeptide reads, in one-letter code: uncharacterized protein (977 aa).

Positions 1 to 24 are enriched in polar residues; it reads MMQQRSGSLSLLSNAVQAGQSSDP. The tract at residues 1–65 is disordered; that stretch reads MMQQRSGSLS…HEKTKAGKDR (65 aa). Residues 72-99 constitute a DNA-binding region (zn(2)-C6 fungal-type); sequence CQSCRKKKVKCSGERPSCDQCLKHNIPC. The disordered stretch occupies residues 176-195; it reads LSHPTIVPSSNSSSLLNSTN. Low complexity predominate over residues 177–195; that stretch reads SHPTIVPSSNSSSLLNSTN. The residue at position 220 (Ser-220) is a Phosphoserine. 3 disordered regions span residues 287 to 307, 357 to 380, and 751 to 774; these read TDSLSIVSNPSQTPAKFDSNR, NSASSGLSTSYTNNNDTTSDNNSL, and HTPINVTNGESQNNSNNDPSANGA. The span at 364–379 shows a compositional bias: low complexity; the sequence is STSYTNNNDTTSDNNS. Residues 751–770 are compositionally biased toward polar residues; it reads HTPINVTNGESQNNSNNDPS.

The protein localises to the cytoplasm. Its subcellular location is the nucleus. This is an uncharacterized protein from Schizosaccharomyces pombe (strain 972 / ATCC 24843) (Fission yeast).